We begin with the raw amino-acid sequence, 293 residues long: tRNA (guanine(9)-N1)-methyltransferase (293 aa).

Positions 1-31 (MSNDEINQNEEKVKRTPPLPPVPEGMSKKQW) are disordered. Thr-16 is subject to Phosphothreonine. Positions 32–61 (KKMCKRQRWEENKAKYNAERRVKKKRLRHE) form a coiled coil. The region spanning 83–279 (EPRINVNQTD…SVLPPRKLDA (197 aa)) is the SAM-dependent MTase TRM10-type domain. Residues 186-187 (LT), Gly-206, 210-214 (DKNRY), Cys-218, Leu-232, and 244-246 (RVL) contribute to the S-adenosyl-L-methionine site. Asp-210 functions as the Proton acceptor in the catalytic mechanism. Ser-283 carries the phosphoserine modification.

It belongs to the class IV-like SAM-binding methyltransferase superfamily. TRM10 family. As to quaternary structure, monomer.

The protein resides in the cytoplasm. The protein localises to the nucleus. The enzyme catalyses guanosine(9) in tRNA + S-adenosyl-L-methionine = N(1)-methylguanosine(9) in tRNA + S-adenosyl-L-homocysteine + H(+). Functionally, S-adenosyl-L-methionine-dependent guanine N(1)-methyltransferase that catalyzes the formation of N(1)-methylguanine at position 9 (m1G9) in cytoplasmic tRNAs. The chain is tRNA (guanine(9)-N1)-methyltransferase from Saccharomyces cerevisiae (strain ATCC 204508 / S288c) (Baker's yeast).